The chain runs to 141 residues: Large ribosomal subunit protein uL11 (141 aa).

The protein belongs to the universal ribosomal protein uL11 family. In terms of assembly, part of the ribosomal stalk of the 50S ribosomal subunit. Interacts with L10 and the large rRNA to form the base of the stalk. L10 forms an elongated spine to which L12 dimers bind in a sequential fashion forming a multimeric L10(L12)X complex. One or more lysine residues are methylated.

Forms part of the ribosomal stalk which helps the ribosome interact with GTP-bound translation factors. This chain is Large ribosomal subunit protein uL11, found in Opitutus terrae (strain DSM 11246 / JCM 15787 / PB90-1).